We begin with the raw amino-acid sequence, 1384 residues long: DNA-directed RNA polymerase subunit beta'' (1384 aa).

4 residues coordinate Zn(2+): Cys224, Cys297, Cys304, and Cys307.

Belongs to the RNA polymerase beta' chain family. RpoC2 subfamily. In plastids the minimal PEP RNA polymerase catalytic core is composed of four subunits: alpha, beta, beta', and beta''. When a (nuclear-encoded) sigma factor is associated with the core the holoenzyme is formed, which can initiate transcription. Zn(2+) is required as a cofactor.

It localises to the plastid. It is found in the chloroplast. It carries out the reaction RNA(n) + a ribonucleoside 5'-triphosphate = RNA(n+1) + diphosphate. DNA-dependent RNA polymerase catalyzes the transcription of DNA into RNA using the four ribonucleoside triphosphates as substrates. The protein is DNA-directed RNA polymerase subunit beta'' of Sinapis alba (White mustard).